The chain runs to 535 residues: Probable glucomannan 4-beta-mannosyltransferase 14 (535 aa).

Residues 42 to 62 traverse the membrane as a helical segment; the sequence is QVVSVLLFVDAAYMAIVVAIV. Aspartate 131 is an active-site residue. 2 residues coordinate substrate: aspartate 193 and aspartate 195. The active site involves aspartate 287. The next 4 membrane-spanning stretches (helical) occupy residues 366–386, 403–423, 482–502, and 503–523; these read IVVH…TVIF, ITIL…YWIL, IMVG…GRTY, and LYVY…GYVG.

This sequence belongs to the glycosyltransferase 2 family. Plant cellulose synthase-like A subfamily.

Its subcellular location is the golgi apparatus membrane. The catalysed reaction is GDP-mannose + (glucomannan)n = GDP + (glucomannan)n+1.. Functionally, probable mannan synthase which consists of a 4-beta-mannosyltransferase activity on mannan using GDP-mannose. The beta-1,4-mannan product is the backbone for galactomannan synthesis by galactomannan galactosyltransferase. Galactomannan is a noncellulosic polysaccharides of plant cell wall. This Arabidopsis thaliana (Mouse-ear cress) protein is Probable glucomannan 4-beta-mannosyltransferase 14.